We begin with the raw amino-acid sequence, 282 residues long: 4-hydroxy-3-methylbut-2-enyl diphosphate reductase (282 aa).

Position 14 (Cys-14) interacts with [4Fe-4S] cluster. Positions 43 and 78 each coordinate (2E)-4-hydroxy-3-methylbut-2-enyl diphosphate. Positions 43 and 78 each coordinate dimethylallyl diphosphate. Isopentenyl diphosphate contacts are provided by His-43 and His-78. Cys-100 contacts [4Fe-4S] cluster. A (2E)-4-hydroxy-3-methylbut-2-enyl diphosphate-binding site is contributed by His-128. His-128 serves as a coordination point for dimethylallyl diphosphate. His-128 lines the isopentenyl diphosphate pocket. The active-site Proton donor is Glu-130. Thr-164 is a (2E)-4-hydroxy-3-methylbut-2-enyl diphosphate binding site. Residue Cys-192 coordinates [4Fe-4S] cluster. Ser-220, Ser-221, Asn-222, and Ser-266 together coordinate (2E)-4-hydroxy-3-methylbut-2-enyl diphosphate. Residues Ser-220, Ser-221, Asn-222, and Ser-266 each coordinate dimethylallyl diphosphate. Isopentenyl diphosphate-binding residues include Ser-220, Ser-221, Asn-222, and Ser-266.

The protein belongs to the IspH family. The cofactor is [4Fe-4S] cluster.

The catalysed reaction is isopentenyl diphosphate + 2 oxidized [2Fe-2S]-[ferredoxin] + H2O = (2E)-4-hydroxy-3-methylbut-2-enyl diphosphate + 2 reduced [2Fe-2S]-[ferredoxin] + 2 H(+). The enzyme catalyses dimethylallyl diphosphate + 2 oxidized [2Fe-2S]-[ferredoxin] + H2O = (2E)-4-hydroxy-3-methylbut-2-enyl diphosphate + 2 reduced [2Fe-2S]-[ferredoxin] + 2 H(+). It functions in the pathway isoprenoid biosynthesis; dimethylallyl diphosphate biosynthesis; dimethylallyl diphosphate from (2E)-4-hydroxy-3-methylbutenyl diphosphate: step 1/1. The protein operates within isoprenoid biosynthesis; isopentenyl diphosphate biosynthesis via DXP pathway; isopentenyl diphosphate from 1-deoxy-D-xylulose 5-phosphate: step 6/6. Functionally, catalyzes the conversion of 1-hydroxy-2-methyl-2-(E)-butenyl 4-diphosphate (HMBPP) into a mixture of isopentenyl diphosphate (IPP) and dimethylallyl diphosphate (DMAPP). Acts in the terminal step of the DOXP/MEP pathway for isoprenoid precursor biosynthesis. This chain is 4-hydroxy-3-methylbut-2-enyl diphosphate reductase, found in Clostridium perfringens (strain 13 / Type A).